The primary structure comprises 737 residues: tRNA-dihydrouridine(47) synthase [NAD(P)(+)] (737 aa).

Composition is skewed to basic and acidic residues over residues 1–11 and 24–33; these read MESQETAKRPI and PATKRVKLDD. The segment at 1 to 127 is disordered; it reads MESQETAKRP…GKKKRPKGQN (127 aa). Low complexity predominate over residues 35–44; sequence PVPQIQEEPS. A compositionally biased stretch (basic and acidic residues) spans 57–82; it reads EDEKPTEQRQDDRDKRRGIAPIKKEY. 2 consecutive C3H1-type zinc fingers follow at residues 142-166 and 187-208; these read CNSV…NALH and CPVW…VESH. FMN-binding positions include 332–334 and Gln407; that span reads PLT. The active-site Proton donor is Cys439. FMN is bound by residues Lys479, His520, 577–579, and 601–602; these read NGD and GR.

The protein belongs to the Dus family. Dus3 subfamily. The cofactor is FMN.

It localises to the cytoplasm. Its subcellular location is the nucleus. It carries out the reaction 5,6-dihydrouridine(47) in tRNA + NAD(+) = uridine(47) in tRNA + NADH + H(+). The catalysed reaction is 5,6-dihydrouridine(47) in tRNA + NADP(+) = uridine(47) in tRNA + NADPH + H(+). It catalyses the reaction a 5,6-dihydrouridine in mRNA + NAD(+) = a uridine in mRNA + NADH + H(+). The enzyme catalyses a 5,6-dihydrouridine in mRNA + NADP(+) = a uridine in mRNA + NADPH + H(+). In terms of biological role, catalyzes the synthesis of dihydrouridine, a modified base found in the D-loop of most tRNAs. Specifically modifies U47 in cytoplasmic tRNAs. Catalyzes the synthesis of dihydrouridine in some mRNAs, thereby affecting their translation. This Neurospora crassa (strain ATCC 24698 / 74-OR23-1A / CBS 708.71 / DSM 1257 / FGSC 987) protein is tRNA-dihydrouridine(47) synthase [NAD(P)(+)] (dus-3).